We begin with the raw amino-acid sequence, 329 residues long: NADH-quinone oxidoreductase subunit H (329 aa).

The next 9 helical transmembrane spans lie at 9-29, 42-62, 75-95, 117-137, 154-174, 188-208, 238-258, 269-291, and 309-329; these read LIKI…ATYI, GPCY…IKLF, FIFT…MAPI, IGFL…ILAG, IQLL…LMVV, GGFL…FLIA, LKWG…SFVI, WGFI…LSMW, and WKIM…IILI.

This sequence belongs to the complex I subunit 1 family. As to quaternary structure, NDH-1 is composed of 14 different subunits. Subunits NuoA, H, J, K, L, M, N constitute the membrane sector of the complex.

It is found in the cell inner membrane. The catalysed reaction is a quinone + NADH + 5 H(+)(in) = a quinol + NAD(+) + 4 H(+)(out). In terms of biological role, NDH-1 shuttles electrons from NADH, via FMN and iron-sulfur (Fe-S) centers, to quinones in the respiratory chain. The immediate electron acceptor for the enzyme in this species is believed to be ubiquinone. Couples the redox reaction to proton translocation (for every two electrons transferred, four hydrogen ions are translocated across the cytoplasmic membrane), and thus conserves the redox energy in a proton gradient. This subunit may bind ubiquinone. This chain is NADH-quinone oxidoreductase subunit H, found in Helicobacter pylori (strain Shi470).